The primary structure comprises 144 residues: Large ribosomal subunit protein uL11 (144 aa).

The protein belongs to the universal ribosomal protein uL11 family. Part of the ribosomal stalk of the 50S ribosomal subunit. Interacts with L10 and the large rRNA to form the base of the stalk. L10 forms an elongated spine to which L12 dimers bind in a sequential fashion forming a multimeric L10(L12)X complex. One or more lysine residues are methylated.

Forms part of the ribosomal stalk which helps the ribosome interact with GTP-bound translation factors. The chain is Large ribosomal subunit protein uL11 from Streptomyces sp. (strain FRI-5).